Consider the following 549-residue polypeptide: Cation/acetate symporter ActP (549 aa).

13 consecutive transmembrane segments (helical) span residues 32–54 (IQAI…WASK), 75–97 (GMAI…LVYT), 102–124 (GLIY…AERL), 145–167 (IRIL…QMVG), 182–204 (VAVV…LATT), 211–233 (AILL…NFNF), 263–285 (ALSL…MRFF), 298–320 (FYAT…GAIL), 361–383 (AVAF…SAVS), 404–423 (VSKI…GILF), 428–450 (IAFM…ILLS), 462–484 (LVGG…TIWV), and 494–516 (YPYE…LFSI).

Belongs to the sodium:solute symporter (SSF) (TC 2.A.21) family.

The protein resides in the cell inner membrane. In terms of biological role, transports acetate. The chain is Cation/acetate symporter ActP from Photorhabdus laumondii subsp. laumondii (strain DSM 15139 / CIP 105565 / TT01) (Photorhabdus luminescens subsp. laumondii).